The sequence spans 76 residues: Bacteriocin uberolysin (76 aa).

Residues 1 to 6 (MDILLE) constitute a propeptide that is removed on maturation. Positions 7 to 76 (LAGYTGIASG…RNLKAQAVIW (70 aa)) form a cross-link, cyclopeptide (Leu-Trp).

It belongs to the bacteriocin class V family.

The protein resides in the secreted. Cyclopeptide antibiotic with bacteriolytic activity against most streptococci (except S.rattus and S.mutans), Listeria spp., enterococci and staphylococci. The sequence is that of Bacteriocin uberolysin (ublA) from Streptococcus uberis.